Reading from the N-terminus, the 301-residue chain is Acetylglutamate kinase (301 aa).

Residues 72–73 (GG), R94, and N199 each bind substrate.

It belongs to the acetylglutamate kinase family. ArgB subfamily.

The protein resides in the cytoplasm. It carries out the reaction N-acetyl-L-glutamate + ATP = N-acetyl-L-glutamyl 5-phosphate + ADP. Its pathway is amino-acid biosynthesis; L-arginine biosynthesis; N(2)-acetyl-L-ornithine from L-glutamate: step 2/4. Functionally, catalyzes the ATP-dependent phosphorylation of N-acetyl-L-glutamate. The sequence is that of Acetylglutamate kinase from Bartonella quintana (strain Toulouse) (Rochalimaea quintana).